The following is a 65-amino-acid chain: UPF0337 protein gbs1203 (65 aa).

The span at 1-12 shows a compositional bias: basic and acidic residues; that stretch reads MSEEKFDAKVDK. The interval 1–29 is disordered; that stretch reads MSEEKFDAKVDKVSGSVKESVGKLTGDKE.

Belongs to the UPF0337 (CsbD) family.

This chain is UPF0337 protein gbs1203, found in Streptococcus agalactiae serotype III (strain NEM316).